We begin with the raw amino-acid sequence, 631 residues long: uncharacterized protein (631 aa).

Transmembrane regions (helical) follow at residues 42–62, 76–96, 106–128, 152–172, 344–364, 366–386, 398–418, 429–449, and 464–484; these read VLVG…IGGF, ALKL…GTLL, VLGL…GPAP, AGLT…GWLW, ALKY…FGFA, SYWI…VFTL, IGVI…YIAF, MLIV…ALVI, and IARL…TMLL.

It belongs to the YccS/YhfK family.

The protein resides in the cell membrane. This is an uncharacterized protein from Bacillus subtilis (strain 168).